The primary structure comprises 896 residues: Valine--tRNA ligase (896 aa).

Residues 48–58 carry the 'HIGH' region motif; it reads PNVTGSLHMGH. A 'KMSKS' region motif is present at residues 543–547; it reads KMSKS. Residue K546 participates in ATP binding. The stretch at 830–896 forms a coiled coil; sequence VIDLDAERTR…ARLGAALERL (67 aa).

This sequence belongs to the class-I aminoacyl-tRNA synthetase family. ValS type 1 subfamily. As to quaternary structure, monomer.

The protein localises to the cytoplasm. The enzyme catalyses tRNA(Val) + L-valine + ATP = L-valyl-tRNA(Val) + AMP + diphosphate. Its function is as follows. Catalyzes the attachment of valine to tRNA(Val). As ValRS can inadvertently accommodate and process structurally similar amino acids such as threonine, to avoid such errors, it has a 'posttransfer' editing activity that hydrolyzes mischarged Thr-tRNA(Val) in a tRNA-dependent manner. This chain is Valine--tRNA ligase, found in Granulibacter bethesdensis (strain ATCC BAA-1260 / CGDNIH1).